Reading from the N-terminus, the 183-residue chain is I-kappa-B like protein N2 (183 aa).

ANK repeat units lie at residues 62–95 and 99–129; these read DGNT…DLNL and CHKP…NLEA. Residues 163–183 are disordered; sequence PRQDGSSEDEVSDSEEKSDSE.

The protein belongs to the polydnaviridae I-Kappa-B like protein family.

Suppresses the host immune response through NF-kappa-B inactivation. Possesses ankyrin repeat domains required for NF-kappa-B binding but lacks the regulatory regions required for dissociation from NF-kappa-B and degradation. Therefore, prevents host NF-kappa-B release and subsequent activation. The chain is I-kappa-B like protein N2 (N5) from Microplitis demolitor (Parasitoid wasp).